Consider the following 334-residue polypeptide: Mediator of RNA polymerase II transcription subunit 4 (334 aa).

Residues 76-100 are a coiled coil; sequence LIRTLKAHVEKRDEVIQQVENNLKA. Over residues 188–203 the composition is skewed to low complexity; it reads SSAQKPIIASPSASSS. Disordered stretches follow at residues 188 to 234 and 252 to 334; these read SSAQ…GYGA and EKQW…GRNK. 2 stretches are compositionally biased toward polar residues: residues 204 to 225 and 264 to 282; these read NGGTAPTRTVGTPLVNSATNGD and ATSSQSPLSGAPQSPSSPS.

This sequence belongs to the Mediator complex subunit 4 family. As to quaternary structure, component of the Mediator complex.

It localises to the nucleus. Component of the Mediator complex, a coactivator involved in the regulated transcription of nearly all RNA polymerase II-dependent genes. Mediator functions as a bridge to convey information from gene-specific regulatory proteins to the basal RNA polymerase II transcription machinery. Mediator is recruited to promoters by direct interactions with regulatory proteins and serves as a scaffold for the assembly of a functional preinitiation complex with RNA polymerase II and the general transcription factors. The protein is Mediator of RNA polymerase II transcription subunit 4 (mdt-4) of Caenorhabditis briggsae.